Here is a 358-residue protein sequence, read N- to C-terminus: Arginine kinase (358 aa).

In terms of domain architecture, Phosphagen kinase N-terminal spans 6–88; that stretch reads SVEELWAKLD…LDAVIKEYHK (83 aa). Residue 61–65 participates in substrate binding; it reads GVGIY. The 238-residue stretch at 116-353 folds into the Phosphagen kinase C-terminal domain; it reads YIVSTRVRVG…EACLAKEKEL (238 aa). Residues 119–123 and His182 contribute to the ATP site; that span reads STRVR. Residue Glu222 participates in substrate binding. An ATP-binding site is contributed by Arg226. Cys269 is a binding site for substrate. ATP contacts are provided by residues 278–282 and 306–311; these read RASVH and RGIHGE. Glu311 provides a ligand contact to substrate.

The protein belongs to the ATP:guanido phosphotransferase family. As to quaternary structure, monomer.

The catalysed reaction is L-arginine + ATP = N(omega)-phospho-L-arginine + ADP + H(+). The polypeptide is Arginine kinase (Haliotis madaka (Giant abalone)).